The sequence spans 418 residues: MNIIDELTWRGAINQQTDAEGLKKLTSEKKISLYCGVDPTGDSMHIGHLIPFMMMKRFELAGHHPYILIGGATGSIGDPSGRKTERQLQTMDKVQHNVKALSRQMQRLFGGDSNVTMVNNYDWLSKISLLDFLRDYGKLVNINTMLAKDIVASRLDTGISFTEFTYQILQSVDFLTLHNDHNIQLQIGGADQWGNITAGIDLIHKIKGADEAVYGLTIPLMLKADGTKFGKTAGGAIWLDADKTSPYEFYQFWLNQDDRDVIRYLKFFTFLGQDEINQLAAAVEDEPEKRLAQRRLAEEVTRFVHGEEALESAQHISEILFSGDIQRLTLTEVQEAFEKVPNVSINSEPTNIVELLTETAIEPSRRQAREDITNGAITINGERCTDTDAQLNPKTNFSGKFMVIRRGKKNYFLAKVKD.

L-tyrosine is bound at residue tyrosine 34. Positions 39-48 (PTGDSMHIGH) match the 'HIGH' region motif. Tyrosine 166 and glutamine 170 together coordinate L-tyrosine. The 'KMSKS' region motif lies at 228–232 (KFGKT). Position 231 (lysine 231) interacts with ATP. The S4 RNA-binding domain maps to 350–417 (TNIVELLTET…KKNYFLAKVK (68 aa)).

This sequence belongs to the class-I aminoacyl-tRNA synthetase family. TyrS type 1 subfamily. As to quaternary structure, homodimer.

The protein localises to the cytoplasm. The enzyme catalyses tRNA(Tyr) + L-tyrosine + ATP = L-tyrosyl-tRNA(Tyr) + AMP + diphosphate + H(+). Its function is as follows. Catalyzes the attachment of tyrosine to tRNA(Tyr) in a two-step reaction: tyrosine is first activated by ATP to form Tyr-AMP and then transferred to the acceptor end of tRNA(Tyr). This chain is Tyrosine--tRNA ligase, found in Levilactobacillus brevis (Lactobacillus brevis).